Consider the following 1375-residue polypeptide: DNA-directed RNA polymerase subunit beta (1375 aa).

The protein belongs to the RNA polymerase beta chain family. In terms of assembly, the RNAP catalytic core consists of 2 alpha, 1 beta, 1 beta' and 1 omega subunit. When a sigma factor is associated with the core the holoenzyme is formed, which can initiate transcription.

The enzyme catalyses RNA(n) + a ribonucleoside 5'-triphosphate = RNA(n+1) + diphosphate. In terms of biological role, DNA-dependent RNA polymerase catalyzes the transcription of DNA into RNA using the four ribonucleoside triphosphates as substrates. This is DNA-directed RNA polymerase subunit beta from Methylibium petroleiphilum (strain ATCC BAA-1232 / LMG 22953 / PM1).